The chain runs to 299 residues: Urease accessory protein UreD (299 aa).

This sequence belongs to the UreD family. As to quaternary structure, ureD, UreF and UreG form a complex that acts as a GTP-hydrolysis-dependent molecular chaperone, activating the urease apoprotein by helping to assemble the nickel containing metallocenter of UreC. The UreE protein probably delivers the nickel.

It is found in the cytoplasm. Required for maturation of urease via the functional incorporation of the urease nickel metallocenter. The chain is Urease accessory protein UreD from Prochlorococcus marinus (strain MIT 9303).